The sequence spans 328 residues: Dihydroorotate dehydrogenase (quinone), mitochondrial (328 aa).

The helical transmembrane segment at 21 to 38 (AHGLSIAGLKTGLVTGSA) threads the bilayer. FMN-binding positions include 61 to 65 (AGYDK) and threonine 85. Lysine 65 lines the substrate pocket. Residue 110–114 (NRLGF) coordinates substrate. The FMN site is built by asparagine 139 and asparagine 170. 170 to 175 (NISSPN) lines the substrate pocket. Serine 173 (nucleophile) is an active-site residue. Residues lysine 215 and serine 243 each coordinate FMN. Residue 244-245 (NT) participates in substrate binding. FMN-binding residues include glycine 266 and glycine 295.

This sequence belongs to the dihydroorotate dehydrogenase family. Type 2 subfamily. FMN serves as cofactor.

It is found in the mitochondrion inner membrane. It catalyses the reaction (S)-dihydroorotate + a quinone = orotate + a quinol. It functions in the pathway pyrimidine metabolism; UMP biosynthesis via de novo pathway; orotate from (S)-dihydroorotate (quinone route): step 1/1. Its function is as follows. Catalyzes the conversion of dihydroorotate to orotate with quinone as electron acceptor. The polypeptide is Dihydroorotate dehydrogenase (quinone), mitochondrial (URA1) (Cyclocybe aegerita (Black poplar mushroom)).